Here is a 270-residue protein sequence, read N- to C-terminus: L-fucose dehydrogenase (270 aa).

NAD(+) contacts are provided by R19, I21, D40, K41, D62, V63, N89, Y154, K158, I187, T189, and L191.

It belongs to the short-chain dehydrogenases/reductases (SDR) family.

It catalyses the reaction L-fucose + NAD(+) = L-fucono-1,5-lactone + NADH + H(+). The catalysed reaction is D-arabinose + NAD(+) = D-arabinono-1,5-lactone + NADH + H(+). The enzyme catalyses L-galactose + NAD(+) = L-galactono-1,5-lactone + NADH + H(+). Functionally, catalyzes the NAD(+)-dependent oxidation of L-fucose, yielding L-fucono-1,5-lactone, which rapidly converts spontaneously to L-fucone-1,4-lactone. Does not use NADPH. Displays low activity on L-fucose, D-arabinose and L-galactose compared with rabbit and human. This is consitent with the low L-fucose metabolism observed in this species. In Rattus norvegicus (Rat), this protein is L-fucose dehydrogenase (Hsd17b14).